We begin with the raw amino-acid sequence, 362 residues long: Aminomethyltransferase (362 aa).

It belongs to the GcvT family. The glycine cleavage system is composed of four proteins: P, T, L and H.

The catalysed reaction is N(6)-[(R)-S(8)-aminomethyldihydrolipoyl]-L-lysyl-[protein] + (6S)-5,6,7,8-tetrahydrofolate = N(6)-[(R)-dihydrolipoyl]-L-lysyl-[protein] + (6R)-5,10-methylene-5,6,7,8-tetrahydrofolate + NH4(+). Its function is as follows. The glycine cleavage system catalyzes the degradation of glycine. This Listeria monocytogenes serotype 4b (strain CLIP80459) protein is Aminomethyltransferase.